The chain runs to 139 residues: Natriuretic peptide Mc-NP (139 aa).

An N-terminal signal peptide occupies residues 1–25; that stretch reads MVGLSRLRGGGLLLVLALLPLALDG. Residues 26-75 constitute a propeptide that is removed on maturation; sequence KPLEEAPTAPSRIIPFSRPVRKQSQAVLDPMVHPERPAGSGDDGDSRRLE. Positions 45-72 are disordered; that stretch reads VRKQSQAVLDPMVHPERPAGSGDDGDSR. A disulfide bridge connects residues Cys86 and Cys102. Residues 117 to 139 constitute a propeptide that is removed on maturation; it reads IIPFSRPVRKESRAALDRMQQPG.

Belongs to the natriuretic peptide family. Expressed by the venom gland.

The protein localises to the secreted. In terms of biological role, snake venom natriuretic peptide that dose-dependently induces the rapid relaxation of rat aortic strips phenylephrine-precontracted. Acts by stimulating cGMP production in a dose-dependent manner (by probably activating NPR1 and/or NPR2). May also show potent hypotensive effects. A synthetic peptide (AA 77-108, where the Cys-95 is replaced by a Ser) increases sodium excretion and urinary volume in rat kidneys. This is Natriuretic peptide Mc-NP from Micrurus corallinus (Brazilian coral snake).